The following is a 601-amino-acid chain: ATP-dependent lipid A-core flippase (601 aa).

5 helical membrane-spanning segments follow: residues 33–53 (CVAVVAMIAYAAITPFFAKLI), 72–92 (VSLMLIGLSVLRGIAGFLSEY), 158–178 (VIGLMALMVYQNPVLSLVFLV), 255–275 (LGGGVIHLISVAGVAGILYVV), and 283–303 (TITPGSLMAFIAAMAMMLSPI). An ABC transmembrane type-1 domain is found at 34 to 315 (VAVVAMIAYA…LSQVVSVMQR (282 aa)). One can recognise an ABC transporter domain in the interval 347-583 (IEYRHVSLVY…RGGYADLYAM (237 aa)). Position 381–388 (381–388 (GQSGSGKT)) interacts with ATP.

This sequence belongs to the ABC transporter superfamily. Lipid exporter (TC 3.A.1.106) family. In terms of assembly, homodimer.

It localises to the cell inner membrane. The enzyme catalyses ATP + H2O + lipid A-core oligosaccharideSide 1 = ADP + phosphate + lipid A-core oligosaccharideSide 2.. Functionally, involved in lipopolysaccharide (LPS) biosynthesis. Translocates lipid A-core from the inner to the outer leaflet of the inner membrane. Transmembrane domains (TMD) form a pore in the inner membrane and the ATP-binding domain (NBD) is responsible for energy generation. The protein is ATP-dependent lipid A-core flippase of Methylococcus capsulatus (strain ATCC 33009 / NCIMB 11132 / Bath).